A 909-amino-acid polypeptide reads, in one-letter code: MALTPMMKQYLEVKERNKDCILFFRLGDFYEMFFEDAETAARELELVLTGRDCGLENRAPMCGIPYHAANTYISRLITKGYKVAICEQLEDPSKAKGIVKRDVIKIYTPGTYSDASFLEETKNNYLMSLYLENELVCMAFADVSTGDFQCTYVKYNESSILDEISKFMPKEIVIIDSIDDTIIKAIKERFEVSFTVKNKDFFYLNASLNLKNQFPDFKEENYDDIVITGCNGLLNYIIETQKTTLIHINKLDYYETVDYLSIDINSRRNLELTETLRDKSKKGSLLWVLDKTTTAMGARLLRKWVEQPLIHKEIIENRQNAVEEILNNVPLLDDLRNNLKDVYDIERLAGKISSKTVNAKELLSLKNSIGNLPIIKKIIENYNTDLLKNIYSSLDCLEDLYSLLDNSILPSPALSIKEGGIIKDGYNKTIDELRMAKSHGTEWIASLEEQERNITGIKSLKVKYNKVFGYYIEITKSNLNQVPENRYIRKQTLANCERFITPELKEVEDKILGAQEKLMELEYNVFVEIRELIEKEIYRIKNTAKLISSIDVLQSLAIVALESNYSKPIIKLDGELLIKDGRHPVVEKMIPRDSFVSNDTILDNKDHQLLLITGPNMAGKSTYMRQVALITLMAQIGSFVPAKEAEIVICDKIFTRIGASDDLARGKSTFMVEMWEVANILNNATNKSLILLDEVGRGTSTYDGLSIAWAVIEYICKDNNLKSKTLFATHYHELTSLEGKIKGVKNYSIAVKKVDDDIIFLRKIIEGGADESYGIEVAKLAGIPSVVTNRAKEILNTLEENSPQNNDISKESSSSSNSHDKLESSVIKESESNIKTYDEISNLETNKIKEAQVEVAVEKEVTQDIKQIGFLDIEKEALIKEISSIDILNMTVKDCFDKLYDIINKAKSL.

Residue 614–621 coordinates ATP; the sequence is GPNMAGKS. Residues 798-827 form a disordered region; it reads LEENSPQNNDISKESSSSSNSHDKLESSVI. Positions 818–827 are enriched in basic and acidic residues; that stretch reads SHDKLESSVI.

It belongs to the DNA mismatch repair MutS family.

Its function is as follows. This protein is involved in the repair of mismatches in DNA. It is possible that it carries out the mismatch recognition step. This protein has a weak ATPase activity. In Clostridium novyi (strain NT), this protein is DNA mismatch repair protein MutS.